Reading from the N-terminus, the 169-residue chain is Small proline-rich protein 3 (169 aa).

A compositionally biased stretch (low complexity) spans 1–24 (MSSYQQKQTFTPPPQLQQQQVKQP). The tract at residues 1-57 (MSSYQQKQTFTPPPQLQQQQVKQPSQPPPQEIFVPTTKEPCHSKVPQPGNTKIPEPG) is disordered. The residue at position 2 (S2) is an N-acetylserine. A run of 14 repeats spans residues 43-50 (SKVPQPGN), 51-58 (TKIPEPGC), 59-66 (TKVPEPGC), 67-74 (TKVPEPGC), 75-82 (TKVPEPGC), 83-90 (TKVPEPGC), 91-98 (TKVPEPGC), 99-106 (TKVPEPGY), 107-114 (TKVPEPGS), 115-122 (IKVPDQGF), 123-130 (IKFPEPGA), 131-138 (IKVPEQGY), 139-146 (TKVPVPGY), and 147-154 (TKLPEPCP). A 14 X 8 AA approximate tandem repeats region spans residues 43–154 (SKVPQPGNTK…GYTKLPEPCP (112 aa)). The disordered stretch occupies residues 150–169 (PEPCPSTVTPGPAQQKTKQK). Residues 155 to 169 (STVTPGPAQQKTKQK) show a composition bias toward polar residues.

The protein resides in the cytoplasm. Cross-linked envelope protein of keratinocytes. This is Small proline-rich protein 3 (SPRR3) from Homo sapiens (Human).